A 4043-amino-acid polypeptide reads, in one-letter code: Hybrid PKS-NRPS synthetase thnA (4043 aa).

The 435-residue stretch at 6-440 (LEPIAIVGSA…GSNAHAILEE (435 aa)) folds into the Ketosynthase family 3 (KS3) domain. Residues cysteine 179, histidine 319, and histidine 360 each act as for beta-ketoacyl synthase activity in the active site. Residues 558–894 (VFTGQGAQWA…FSDALGFVWT (337 aa)) form a malonyl-CoA:ACP transacylase (MAT) domain region. Residues 952-1090 (HEILGTILPE…ATVKIILGTP (139 aa)) form an N-terminal hotdog fold region. Residues 952–1256 (HEILGTILPE…LSIKTFAPAT (305 aa)) form a dehydratase (DH) domain region. In terms of domain architecture, PKS/mFAS DH spans 952-1258 (HEILGTILPE…IKTFAPATQA (307 aa)). The Proton acceptor; for dehydratase activity role is filled by histidine 984. The C-terminal hotdog fold stretch occupies residues 1105–1258 (LFPIDADRFY…IKTFAPATQA (154 aa)). Aspartate 1166 (proton donor; for dehydratase activity) is an active-site residue. The tract at residues 1417–1591 (LASMMKQITH…RKAGFAGVDA (175 aa)) is methyltransferase (MT) domain. Residues 2146-2320 (TYLLVGLTGK…GSTFDIGQVA (175 aa)) are ketoreductase (KR) domain. Residues 2434-2512 (EQALDILKEC…ELCDRVVDKL (79 aa)) form the Carrier 1 domain. Serine 2472 is modified (O-(pantetheine 4'-phosphoryl)serine). The interval 2521–2618 (GKQGESQPPA…PPPPEPAVER (98 aa)) is disordered. Low complexity predominate over residues 2527–2536 (QPPASTAQPQ). Positions 2537 to 2547 (PVAPKPKPLPV) are enriched in pro residues. Over residues 2578–2605 (YSATEASTRSGSPSEATRLSQKVSSKLQ) the composition is skewed to polar residues. The segment at 2626 to 3067 (IKSVPISLGQ…IPRFSEKQLA (442 aa)) is condensation (C) domain. The segment at 3092-3496 (QVARENPDKV…GTMVFHSRMA (405 aa)) is adenylation (A) domain. Positions 3614 to 3695 (TELTETMIQL…EMAQKVEETI (82 aa)) constitute a Carrier 2 domain. Serine 3655 carries the O-(pantetheine 4'-phosphoryl)serine modification. Residues 3736 to 3954 (ITGATGFLSK…DMLPAVLTAQ (219 aa)) are reductase (R) domain.

It in the C-terminal section; belongs to the NRP synthetase family.

It carries out the reaction malate + 6 malonyl-CoA + acetyl-CoA + 2 AH2 + 2 S-adenosyl-L-methionine + 5 NADPH + 9 H(+) = trihazone A + 2 A + 2 S-adenosyl-L-homocysteine + 6 CO2 + 5 NADP(+) + 7 CoA + 6 H2O. The protein operates within secondary metabolite biosynthesis. Hybrid PKS-NRPS synthetase; part of the gene cluster that produces the tetronate natural products trihazones. The PKS-NRPS synthetase thnA with the help of the trans-enoyl reductase thnE are responsible for the synthesis of the carboxylmethyl containing trihazone A. The PKS portion of thnA synthesizes beta-keto-triene chain from one acetyl-CoA and 6 equivalents of malonyl-CoA, in collaboration with thnE, which selectively reduces the enoyl intermediate during the first and fourth iteration of the PKS. The NRPS domain selects and activates malate, of which the alpha-hydroxyl group attacks the completed polyketide acyl-S-ACP chain to form the ester product. Intramolecular Dieckmann cyclization catalyzed by the terminal reductase domain releases the product as trihazone A from the PKS-NPRS. The pathway begins with the formation of trihazone A by the hybrid PKS-NRPS synthetase thnA and the trans-enoyl reductase thnE. Trihazone A is further decarboxylated by the 2-oxoglutarate-dependent dioxygenase thnC to produce trihazone D. The function of the FAD-dependent monooxygenase thnD has still to be identified. The chain is Hybrid PKS-NRPS synthetase thnA from Trichoderma harzianum (Hypocrea lixii).